We begin with the raw amino-acid sequence, 376 residues long: uncharacterized protein (376 aa).

The protein belongs to the NAD(P)-dependent epimerase/dehydratase family.

This is an uncharacterized protein from Mycobacterium bovis (strain ATCC BAA-935 / AF2122/97).